Consider the following 375-residue polypeptide: Sperm microtubule associated protein 2 (375 aa).

Positions 1-78 are disordered; that stretch reads MGELGEHRAS…MAGEELPETS (78 aa). Positions 59 to 75 are enriched in acidic residues; it reads EPEEEIPPEEMAGEELP. THEG repeat units lie at residues 110 to 129, 176 to 195, 214 to 233, 250 to 269, 282 to 301, 318 to 337, and 352 to 371; these read AKGRKKRSRRLLELAKPKTN, TITVPVVSQRMEELSRPKRF, STLEYQASNRLKQLATPKVR, AAQMAVPTPRTLRLAKPRPP, PKPYVSDYNRLLQLATPKAL, VTKNAVASSRIISLAQPKIR, and ASLVAQASPRIYELATPKYI. The residue at position 287 (S287) is a Phosphoserine.

As to quaternary structure, interacts with CCT5. Testis specific (at protein level). Specifically expressed in spermatids; Sertoli cells maintain the level of expression in spermatids. If isolated spermatids are cultivated for 16 hours alone, the expression of THEG is down-regulated. May require signals from Sertoli cells to initiate changes in its gene expression through spermatogenesis.

The protein localises to the nucleus. May be involved (but not essential) in spermatogenesis. This chain is Sperm microtubule associated protein 2, found in Mus musculus (Mouse).